We begin with the raw amino-acid sequence, 157 residues long: Endoribonuclease YbeY (157 aa).

Zn(2+) contacts are provided by histidine 118, histidine 122, and histidine 128.

This sequence belongs to the endoribonuclease YbeY family. Zn(2+) is required as a cofactor.

The protein localises to the cytoplasm. In terms of biological role, single strand-specific metallo-endoribonuclease involved in late-stage 70S ribosome quality control and in maturation of the 3' terminus of the 16S rRNA. The sequence is that of Endoribonuclease YbeY from Shewanella loihica (strain ATCC BAA-1088 / PV-4).